The sequence spans 316 residues: Transaldolase (316 aa).

The active-site Schiff-base intermediate with substrate is the Lys132.

The protein belongs to the transaldolase family. Type 1 subfamily. As to quaternary structure, homodimer.

The protein resides in the cytoplasm. The enzyme catalyses D-sedoheptulose 7-phosphate + D-glyceraldehyde 3-phosphate = D-erythrose 4-phosphate + beta-D-fructose 6-phosphate. It participates in carbohydrate degradation; pentose phosphate pathway; D-glyceraldehyde 3-phosphate and beta-D-fructose 6-phosphate from D-ribose 5-phosphate and D-xylulose 5-phosphate (non-oxidative stage): step 2/3. Functionally, transaldolase is important for the balance of metabolites in the pentose-phosphate pathway. The polypeptide is Transaldolase (Vibrio parahaemolyticus serotype O3:K6 (strain RIMD 2210633)).